The following is an 854-amino-acid chain: N-terminal acetyltransferase A complex subunit NAT1 (854 aa).

Residue S2 is modified to N-acetylserine. 7 TPR repeats span residues E20–H53, V54–A87, P91–N124, Q126–W162, F241–N274, I384–L417, and R452–V485. The stretch at L623–K667 forms a coiled coil. Positions K626–S668 are disordered. Residue S674 is modified to Phosphoserine. The TPR 8 repeat unit spans residues A728–N761.

In terms of assembly, component of the N-terminal acetyltransferase A (NatA) complex, which is composed of ARD1, NAT1 and NAT5. Can self-associate. NAT1 associates with the nascent polypeptide chain and the ribosome. In terms of processing, the N-terminus is blocked.

The protein resides in the cytoplasm. In terms of biological role, non-catalytic component of the NatA N-terminal acetyltransferase, which catalyzes acetylation of proteins beginning with Met-Ser, Met-Gly and Met-Ala. N-acetylation plays a role in normal eukaryotic translation and processing, protect against proteolytic degradation and protein turnover. NAT1 anchors ARD1 and NAT5 to the ribosome and may present the N termini of nascent polypeptides for acetylation. This chain is N-terminal acetyltransferase A complex subunit NAT1 (NAT1), found in Saccharomyces cerevisiae (strain ATCC 204508 / S288c) (Baker's yeast).